A 991-amino-acid polypeptide reads, in one-letter code: Regulator of telomere elongation helicase 1 homolog (991 aa).

The Helicase ATP-binding domain maps to 7–319 (NGIPVNFPFE…DDLVLLKEIL (313 aa)). 42–49 (SPTGTGKT) is an ATP binding site. [4Fe-4S] cluster is bound by residues Cys-148, Cys-166, Cys-175, and Cys-211. The DEAH box signature appears at 254–257 (DEAH). Residues 812 to 833 (SMKVNPHSRSTKSAGDDAEAGG) are disordered.

It belongs to the helicase family. RAD3/XPD subfamily.

It localises to the nucleus. It carries out the reaction ATP + H2O = ADP + phosphate + H(+). A probable ATP-dependent DNA helicase implicated in DNA repair and the maintenance of genomic stability. Acts as an anti-recombinase to counteract toxic recombination and limit crossover during meiosis. Regulates meiotic recombination and crossover homeostasis by physically dissociating strand invasion events and thereby promotes noncrossover repair by meiotic synthesis dependent strand annealing (SDSA) as well as disassembly of D loop recombination intermediates. The protein is Regulator of telomere elongation helicase 1 homolog of Anopheles gambiae (African malaria mosquito).